A 471-amino-acid polypeptide reads, in one-letter code: Putative multidrug resistance protein MdtD (471 aa).

The Periplasmic segment spans residues 1–11 (MTDLPDSTRWQ). A helical membrane pass occupies residues 12–32 (LWIVAFGFFMQSLDTTIVNTA). The Cytoplasmic segment spans residues 33 to 48 (LPSMAQSLGESPLHMH). The helical transmembrane segment at 49–69 (MVIVSYVLTVAVMLPASGWLA) threads the bilayer. At 70-76 (DKVGVRN) the chain is on the periplasmic side. The helical transmembrane segment at 77–97 (IFFTAIVLFTLGSLFCALSGT) threads the bilayer. Residues 98-101 (LNEL) lie on the Cytoplasmic side of the membrane. A helical transmembrane segment spans residues 102–124 (LLARALQGVGGAMMVPVGRLTVM). Residues 125–137 (KIVPREQYMAAMT) are Periplasmic-facing. Residues 138-158 (FVTLPGQVGPLLGPALGGLLV) traverse the membrane as a helical segment. The Cytoplasmic segment spans residues 159 to 164 (EYASWH). The helical transmembrane segment at 165-185 (WIFLINIPVGIIGAIATLMLM) threads the bilayer. Topologically, residues 186–196 (PNYTMQTRRFD) are periplasmic. A helical membrane pass occupies residues 197–217 (LSGFLLLAVGMAVLTLALDGS). Residues 218–224 (KGTGLSP) are Cytoplasmic-facing. A helical membrane pass occupies residues 225 to 245 (LAIAGLVAVGVVALVLYLLHA). Residues 246–262 (RNNNRALFSLKLFRTRT) are Periplasmic-facing. Residues 263-283 (FSLGLAGSFAGRIGSGMLPFM) traverse the membrane as a helical segment. Residues 284 to 285 (TP) are Cytoplasmic-facing. A helical membrane pass occupies residues 286 to 306 (VFLQIGLGFSPFHAGLMMIPM). Residues 307-341 (VLGSMGMKRIVVQVVNRFGYRRVLVATTLGLSLVT) are Periplasmic-facing. Residues 342 to 362 (LLFMTTALLGWYYVLPFVLFL) traverse the membrane as a helical segment. Over 363–395 (QGMVNSTRFSSMNTLTLKDLPDNLASSGNSLLS) the chain is Cytoplasmic. Residues 396–416 (MIMQLSMSIGVTIAGLLLGLF) form a helical membrane-spanning segment. The Periplasmic segment spans residues 417-430 (GSQHISVDSGTTQT). Residues 431–451 (VFMYTWLSMAFIIALPAFIFA) traverse the membrane as a helical segment. The Cytoplasmic portion of the chain corresponds to 452–471 (RVPNDTHQNVAISRRKRSAQ).

Belongs to the major facilitator superfamily. TCR/Tet family.

Its subcellular location is the cell inner membrane. This chain is Putative multidrug resistance protein MdtD, found in Shigella flexneri.